A 373-amino-acid polypeptide reads, in one-letter code: Chaperone protein DnaJ (373 aa).

The 66-residue stretch at 5–70 folds into the J domain; the sequence is DYYEVLGLQK…EKKSNYDQFG (66 aa). The segment at 132-214 adopts a CR-type zinc-finger fold; it reads GVEKEITVNR…CRGNGNVRKT (83 aa). Zn(2+) is bound by residues cysteine 145, cysteine 148, cysteine 162, cysteine 165, cysteine 188, cysteine 191, cysteine 202, and cysteine 205. CXXCXGXG motif repeat units lie at residues 145 to 152, 162 to 169, 188 to 195, and 202 to 209; these read CEHCNGSG, CPTCSGTG, CDRCSGTG, and CTHCRGNG.

The protein belongs to the DnaJ family. Homodimer. Zn(2+) is required as a cofactor.

The protein resides in the cytoplasm. In terms of biological role, participates actively in the response to hyperosmotic and heat shock by preventing the aggregation of stress-denatured proteins and by disaggregating proteins, also in an autonomous, DnaK-independent fashion. Unfolded proteins bind initially to DnaJ; upon interaction with the DnaJ-bound protein, DnaK hydrolyzes its bound ATP, resulting in the formation of a stable complex. GrpE releases ADP from DnaK; ATP binding to DnaK triggers the release of the substrate protein, thus completing the reaction cycle. Several rounds of ATP-dependent interactions between DnaJ, DnaK and GrpE are required for fully efficient folding. Also involved, together with DnaK and GrpE, in the DNA replication of plasmids through activation of initiation proteins. This is Chaperone protein DnaJ from Clostridium botulinum (strain Alaska E43 / Type E3).